The chain runs to 299 residues: Ribosomal protein L11 methyltransferase (299 aa).

Residues T152, G172, D194, and N234 each contribute to the S-adenosyl-L-methionine site.

It belongs to the methyltransferase superfamily. PrmA family.

Its subcellular location is the cytoplasm. It carries out the reaction L-lysyl-[protein] + 3 S-adenosyl-L-methionine = N(6),N(6),N(6)-trimethyl-L-lysyl-[protein] + 3 S-adenosyl-L-homocysteine + 3 H(+). Functionally, methylates ribosomal protein L11. The sequence is that of Ribosomal protein L11 methyltransferase from Geobacter sulfurreducens (strain ATCC 51573 / DSM 12127 / PCA).